The primary structure comprises 835 residues: Lon protease (835 aa).

One can recognise a Lon N-terminal domain in the interval 36–234 (VHVFPLLRRP…KALILLKKEL (199 aa)). 387–394 (GPPGVGKT) provides a ligand contact to ATP. One can recognise a Lon proteolytic domain in the interval 646–828 (RTPVGVCMGL…DQVFKISFPN (183 aa)). Residues Ser-734 and Lys-777 contribute to the active site.

Belongs to the peptidase S16 family. As to quaternary structure, homohexamer. Organized in a ring with a central cavity.

The protein localises to the cytoplasm. It carries out the reaction Hydrolysis of proteins in presence of ATP.. Its function is as follows. ATP-dependent serine protease that mediates the selective degradation of mutant and abnormal proteins as well as certain short-lived regulatory proteins. Required for cellular homeostasis and for survival from DNA damage and developmental changes induced by stress. Degrades polypeptides processively to yield small peptide fragments that are 5 to 10 amino acids long. Binds to DNA in a double-stranded, site-specific manner. The polypeptide is Lon protease (Protochlamydia amoebophila (strain UWE25)).